The chain runs to 495 residues: UDP-N-acetylmuramoyl-L-alanyl-D-glutamate--2,6-diaminopimelate ligase (495 aa).

UDP-N-acetyl-alpha-D-muramoyl-L-alanyl-D-glutamate is bound by residues Leu28, Ser30, and 45 to 47 (HRV). An ATP-binding site is contributed by 117 to 123 (GTNGKTT). Residues Asn158, 159–160 (TT), Ser186, Gln192, and Arg194 each bind UDP-N-acetyl-alpha-D-muramoyl-L-alanyl-D-glutamate. Lys226 carries the post-translational modification N6-carboxylysine. Residues Arg394, 418–421 (DNPR), Gly469, and Glu473 each bind meso-2,6-diaminopimelate. The short motif at 418–421 (DNPR) is the Meso-diaminopimelate recognition motif element.

This sequence belongs to the MurCDEF family. MurE subfamily. Mg(2+) serves as cofactor. In terms of processing, carboxylation is probably crucial for Mg(2+) binding and, consequently, for the gamma-phosphate positioning of ATP.

It is found in the cytoplasm. It carries out the reaction UDP-N-acetyl-alpha-D-muramoyl-L-alanyl-D-glutamate + meso-2,6-diaminopimelate + ATP = UDP-N-acetyl-alpha-D-muramoyl-L-alanyl-gamma-D-glutamyl-meso-2,6-diaminopimelate + ADP + phosphate + H(+). It participates in cell wall biogenesis; peptidoglycan biosynthesis. Catalyzes the addition of meso-diaminopimelic acid to the nucleotide precursor UDP-N-acetylmuramoyl-L-alanyl-D-glutamate (UMAG) in the biosynthesis of bacterial cell-wall peptidoglycan. The chain is UDP-N-acetylmuramoyl-L-alanyl-D-glutamate--2,6-diaminopimelate ligase from Histophilus somni (strain 129Pt) (Haemophilus somnus).